A 249-amino-acid polypeptide reads, in one-letter code: Triosephosphate isomerase (249 aa).

Residue 8–10 (NWK) coordinates substrate. Catalysis depends on His-95, which acts as the Electrophile. The Proton acceptor role is filled by Glu-163. Substrate-binding residues include Gly-169 and Ser-209.

This sequence belongs to the triosephosphate isomerase family. As to quaternary structure, homodimer.

It localises to the cytoplasm. It catalyses the reaction D-glyceraldehyde 3-phosphate = dihydroxyacetone phosphate. The protein operates within carbohydrate biosynthesis; gluconeogenesis. It participates in carbohydrate degradation; glycolysis; D-glyceraldehyde 3-phosphate from glycerone phosphate: step 1/1. Involved in the gluconeogenesis. Catalyzes stereospecifically the conversion of dihydroxyacetone phosphate (DHAP) to D-glyceraldehyde-3-phosphate (G3P). This Orientia tsutsugamushi (strain Ikeda) (Rickettsia tsutsugamushi) protein is Triosephosphate isomerase.